The chain runs to 175 residues: Small ribosomal subunit protein bS16 (175 aa).

Belongs to the bacterial ribosomal protein bS16 family.

This is Small ribosomal subunit protein bS16 from Cytophaga hutchinsonii (strain ATCC 33406 / DSM 1761 / CIP 103989 / NBRC 15051 / NCIMB 9469 / D465).